The following is a 461-amino-acid chain: MFFMRMICNCINSISMKAQKMDKPVFGWRRNGDDLSLSDVHSSIRIKPDASTFRRAMAFFGPGYLVAVGYMDPGNWATSLAGGSKFGYTLLAVALVSNIMAIVLQSLCARLAIASGRDLAQACRDAYPKPVAMVLWLLAEIAIIATDIAEVIGTAIGLNLIFGIPLELGVLITALDVFLILYLQKLGFRWVEALVITLLGVIAVCFAIQLALADPDWGQVILGFAPTTEIVTNPDMLYLALGILGATVMPHNLYLHSGIVQTREIGPTIAEKREALKFATLDSTIALMFALLINASILILAAATFNKTGQTNVAELGEAHSLLAPLLGLAIAPTLFGVALLCCGINSTVTATLAGQIVMEGFLKMRLAPWLRRLITRAIAIVPAAGVTIFYGDSGTGQLLILTQVVLSLQLSFAVFPLVMFTSDKAKMGELRSPLWLSAIAWLIAVVIAALNVKLLMDFMG.

The next 11 membrane-spanning stretches (helical) occupy residues 56–76 (AMAFFGPGYLVAVGYMDPGNW), 89–109 (TLLAVALVSNIMAIVLQSLCA), 132–152 (AMVLWLLAEIAIIATDIAEVI), 160–180 (LIFGIPLELGVLITALDVFLI), 193–213 (ALVITLLGVIAVCFAIQLALA), 230–250 (IVTNPDMLYLALGILGATVMP), 285–305 (IALMFALLINASILILAAATF), 322–342 (LLAPLLGLAIAPTLFGVALLC), 378–398 (AIAIVPAAGVTIFYGDSGTGQ), 399–419 (LLILTQVVLSLQLSFAVFPLV), and 433–453 (SPLWLSAIAWLIAVVIAALNV).

It belongs to the NRAMP family.

It is found in the cell inner membrane. Functionally, h(+)-stimulated, divalent metal cation uptake system. The protein is Divalent metal cation transporter MntH of Agrobacterium fabrum (strain C58 / ATCC 33970) (Agrobacterium tumefaciens (strain C58)).